Here is a 456-residue protein sequence, read N- to C-terminus: Nuclear distribution protein PAC1 (456 aa).

The region spanning 9 to 41 is the LisH domain; that stretch reads QADELHKSIIAYLSANDLPNTAAALRAELNLTE. Positions 61 to 88 form a coiled coil; that stretch reads TSIVRLQKKIMDLEARNAALQSELDNLT. WD repeat units follow at residues 114 to 153, 156 to 197, 201 to 240, 243 to 282, 288 to 348, 350 to 389, 394 to 437, and 439 to 456; these read SHRDTINCIAFHPKFSSLASGSDDFTIKIWDWELGELEMT, GHTR…KNVR, GHDHSVSAVRFIPCRNLLASASRDKDVRIWDVTTGYCVRS, GHTGWVRDVCPSFDGNFLFSSGDDMTARLWDISAIPNPEN, GHEH…LMTL, GHDNWVRGIVFHPAGKYLLSVSDDRTLRCWDLSQEGKCVK, AHDR…PDVQ, and RCVIATGSVDRKLQIFAA.

The protein belongs to the WD repeat LIS1/nudF family. As to quaternary structure, self-associates. Interacts with NDL1 and dynein.

The protein resides in the cytoplasm. It localises to the cytoskeleton. The protein localises to the spindle pole. Its function is as follows. Positively regulates the activity of the minus-end directed microtubule motor protein dynein. May enhance dynein-mediated microtubule sliding by targeting dynein to the microtubule plus end. Required for nuclear migration during vegetative growth as well as development. Required for retrograde early endosome (EE) transport from the hyphal tip. Required for localization of dynein to the mitotic spindle poles. Recruits additional proteins to the dynein complex at SPBs. The sequence is that of Nuclear distribution protein PAC1 from Ajellomyces capsulatus (strain H143) (Darling's disease fungus).